The following is a 3419-amino-acid chain: Utrophin (3419 aa).

Residues 1-246 are actin-binding; sequence MAKYGHLEAS…LPDKKSIIMY (246 aa). Residue tyrosine 4 is modified to Phosphotyrosine. Serine 10 is subject to Phosphoserine. 2 Calponin-homology (CH) domains span residues 31–135 and 150–255; these read DVQK…LHWQ and TNSE…EVLP. Residues 268–905 form an interaction with SYNM region; that stretch reads TLPRKYKKEC…YQQQLENELK (638 aa). Serine 295 is subject to Phosphoserine. Spectrin repeat units lie at residues 312–416, 421–525, 532–636, 690–795, 801–901, 910–1012, 1019–1121, 1128–1229, 1236–1333, 1335–1436, 1438–1540, 1547–1648, 1653–1747, 1748–1840, 1841–1958, 1969–2070, and 2077–2176; these read DSYQ…SRLH, ELQK…NRLQ, QELL…NQVT, KKFD…RKIQ, NAYF…QQLE, PAYL…RSLE, RDFK…SRLS, MNLK…HTLE, VELL…ISLE, QLQV…LFQK, ANFE…QDLE, RKLK…NTLL, QLEV…INSA, QMLI…KIKA, IPQR…SDRR, KQFH…PRLK, and SGYR…KTRT. The interval 1336–1761 is interaction with SYNM; that stretch reads LQVLRETDHM…GQDPAGTVEA (426 aa). At serine 1998 the chain carries Phosphoserine. Residue serine 2201 is modified to Phosphoserine. Spectrin repeat units follow at residues 2216 to 2319, 2336 to 2426, 2433 to 2542, 2549 to 2674, and 2681 to 2783; these read ADLD…QQLE, EELM…SALE, QTSR…AHLE, NRLL…KQVG, and RDLQ…KQLQ. The disordered stretch occupies residues 2616–2640; the sequence is DQPIEAPEEPRRNPQSKTELTPEER. Positions 2785 to 3152 are interaction with SYNM; sequence AHRDFGPSSQ…TVLEGDNLET (368 aa). In terms of domain architecture, WW spans 2799 to 2832; the sequence is TSVQLPWQRSISHNKVPYYINHQTQTTCWDHPKM. The ZZ-type; degenerate zinc finger occupies 3052 to 3108; sequence KHQAKCNICKECPIVGFRYRSLKHFNYDVCQSCFFSGRTAKGHKLHYPMVEYCIPTT. Zn(2+)-binding residues include cysteine 3057, cysteine 3060, cysteine 3081, and cysteine 3084. Disordered regions lie at residues 3277–3296 and 3344–3395; these read RRGL…YHTS and DSDS…TDLT. A Phosphoserine modification is found at serine 3284.

In terms of assembly, homodimer. Interacts with the syntrophins SNTA1; SNTB1 and SNTB2. Interacts with SYNM. Interacts (via its WWW and ZZ domains) with DAG1 (via the PPXY motif of betaDAG1); the interaction is inhibited by the tyrosine phosphorylation of the PPXY motif of DAG1. Interacts with DTNB. Interacts with PGM5.

The protein resides in the postsynaptic cell membrane. The protein localises to the cytoplasm. It is found in the cytoskeleton. Functionally, may play a role in anchoring the cytoskeleton to the plasma membrane. The protein is Utrophin of Rattus norvegicus (Rat).